The following is a 432-amino-acid chain: Enolase (432 aa).

Gln167 contacts (2R)-2-phosphoglycerate. The active-site Proton donor is the Glu209. Mg(2+)-binding residues include Asp246, Glu290, and Asp317. Residues Lys342, Arg371, Ser372, and Lys393 each contribute to the (2R)-2-phosphoglycerate site. Lys342 functions as the Proton acceptor in the catalytic mechanism.

Belongs to the enolase family. Component of the RNA degradosome, a multiprotein complex involved in RNA processing and mRNA degradation. Mg(2+) is required as a cofactor.

It is found in the cytoplasm. It localises to the secreted. The protein localises to the cell surface. It catalyses the reaction (2R)-2-phosphoglycerate = phosphoenolpyruvate + H2O. It participates in carbohydrate degradation; glycolysis; pyruvate from D-glyceraldehyde 3-phosphate: step 4/5. In terms of biological role, catalyzes the reversible conversion of 2-phosphoglycerate (2-PG) into phosphoenolpyruvate (PEP). It is essential for the degradation of carbohydrates via glycolysis. The chain is Enolase from Salmonella agona (strain SL483).